The sequence spans 587 residues: Arginine--tRNA ligase (587 aa).

The 'HIGH' region signature appears at 126-136 (ANPTGPLHVGH).

Belongs to the class-I aminoacyl-tRNA synthetase family. As to quaternary structure, monomer.

The protein resides in the cytoplasm. It carries out the reaction tRNA(Arg) + L-arginine + ATP = L-arginyl-tRNA(Arg) + AMP + diphosphate. This Aromatoleum aromaticum (strain DSM 19018 / LMG 30748 / EbN1) (Azoarcus sp. (strain EbN1)) protein is Arginine--tRNA ligase.